A 102-amino-acid polypeptide reads, in one-letter code: A-type ATP synthase subunit F (102 aa).

The protein belongs to the V-ATPase F subunit family. As to quaternary structure, has multiple subunits with at least A(3), B(3), C, D, E, F, H, I and proteolipid K(x).

Its subcellular location is the cell membrane. Its function is as follows. Component of the A-type ATP synthase that produces ATP from ADP in the presence of a proton gradient across the membrane. The polypeptide is A-type ATP synthase subunit F (Thermococcus sibiricus (strain DSM 12597 / MM 739)).